A 338-amino-acid chain; its full sequence is Protein SPATA31F3 (338 aa).

The chain crosses the membrane as a helical span at residues 7–29 (VLWDVGYPLYTYGSICIIALIIW). At Ser152 the chain carries Phosphoserine. Residues 290–306 (DRTKNIEKSPTVTKDHV) are compositionally biased toward basic and acidic residues. Residues 290–338 (DRTKNIEKSPTVTKDHVWGATTQKTTEDPEAQPPSTEEEGLIFCDAPSA) form a disordered region.

The protein belongs to the SPATA31 family.

It localises to the membrane. This is Protein SPATA31F3 from Homo sapiens (Human).